Consider the following 303-residue polypeptide: uncharacterized protein (303 aa).

This is an uncharacterized protein from Rickettsia prowazekii (strain Madrid E).